Reading from the N-terminus, the 502-residue chain is ATP synthase subunit alpha (502 aa).

Residue 169 to 176 (GDRQTGKT) coordinates ATP.

The protein belongs to the ATPase alpha/beta chains family. F-type ATPases have 2 components, CF(1) - the catalytic core - and CF(0) - the membrane proton channel. CF(1) has five subunits: alpha(3), beta(3), gamma(1), delta(1), epsilon(1). CF(0) has three main subunits: a(1), b(2) and c(9-12). The alpha and beta chains form an alternating ring which encloses part of the gamma chain. CF(1) is attached to CF(0) by a central stalk formed by the gamma and epsilon chains, while a peripheral stalk is formed by the delta and b chains.

The protein localises to the cell inner membrane. The enzyme catalyses ATP + H2O + 4 H(+)(in) = ADP + phosphate + 5 H(+)(out). Its function is as follows. Produces ATP from ADP in the presence of a proton gradient across the membrane. The alpha chain is a regulatory subunit. The protein is ATP synthase subunit alpha of Solidesulfovibrio magneticus (strain ATCC 700980 / DSM 13731 / RS-1) (Desulfovibrio magneticus).